Here is a 452-residue protein sequence, read N- to C-terminus: Probable splicing factor, arginine/serine-rich 7 (452 aa).

2 consecutive RRM domains span residues 10-91 and 163-240; these read KILH…YPNP and RTVY…HSRV. The disordered stretch occupies residues 258–452; it reads EEAIRMGRNG…GNGDVVMASE (195 aa). The span at 259 to 272 shows a compositional bias: basic and acidic residues; that stretch reads EAIRMGRNGDDRDR. Residues 273–290 are compositionally biased toward basic residues; that stretch reads RRSRSPRRRRSPSPRRRR. Basic and acidic residues predominate over residues 291-305; sequence DSRDRDRDRDRDRRR. Composition is skewed to basic residues over residues 323–335, 345–360, and 370–382; these read KRSR…RRSR, KRSR…KSRD, and SKDR…RSRS. Positions 383 to 421 are enriched in basic and acidic residues; the sequence is RSPEKRRDKEDRKTEKKENENESSLREKLLEKKAARKDS.

This sequence belongs to the splicing factor SR family. Extensively phosphorylated on serine residues in the RS domain.

The protein resides in the nucleus. The sequence is that of Probable splicing factor, arginine/serine-rich 7 (rsp-7) from Caenorhabditis elegans.